The following is a 353-amino-acid chain: Photosystem II D2 protein (353 aa).

Threonine 2 carries the post-translational modification N-acetylthreonine. A Phosphothreonine modification is found at threonine 2. The helical transmembrane segment at cysteine 41 to threonine 61 threads the bilayer. Residue histidine 118 participates in chlorophyll a binding. A helical transmembrane segment spans residues glycine 125–proline 141. Residues glutamine 130 and asparagine 143 each coordinate pheophytin a. The helical transmembrane segment at valine 153 to serine 166 threads the bilayer. Position 198 (histidine 198) interacts with chlorophyll a. A helical transmembrane segment spans residues alanine 208–aspartate 228. Residues histidine 215 and phenylalanine 262 each coordinate a plastoquinone. Histidine 215 contributes to the Fe cation binding site. Histidine 269 contributes to the Fe cation binding site. The chain crosses the membrane as a helical span at residues glycine 279 to arginine 295.

It belongs to the reaction center PufL/M/PsbA/D family. PSII is composed of 1 copy each of membrane proteins PsbA, PsbB, PsbC, PsbD, PsbE, PsbF, PsbH, PsbI, PsbJ, PsbK, PsbL, PsbM, PsbT, PsbX, PsbY, PsbZ, Psb30/Ycf12, at least 3 peripheral proteins of the oxygen-evolving complex and a large number of cofactors. It forms dimeric complexes. The D1/D2 heterodimer binds P680, chlorophylls that are the primary electron donor of PSII, and subsequent electron acceptors. It shares a non-heme iron and each subunit binds pheophytin, quinone, additional chlorophylls, carotenoids and lipids. There is also a Cl(-1) ion associated with D1 and D2, which is required for oxygen evolution. The PSII complex binds additional chlorophylls, carotenoids and specific lipids. is required as a cofactor.

Its subcellular location is the plastid. It localises to the chloroplast thylakoid membrane. The enzyme catalyses 2 a plastoquinone + 4 hnu + 2 H2O = 2 a plastoquinol + O2. Photosystem II (PSII) is a light-driven water:plastoquinone oxidoreductase that uses light energy to abstract electrons from H(2)O, generating O(2) and a proton gradient subsequently used for ATP formation. It consists of a core antenna complex that captures photons, and an electron transfer chain that converts photonic excitation into a charge separation. The D1/D2 (PsbA/PsbD) reaction center heterodimer binds P680, the primary electron donor of PSII as well as several subsequent electron acceptors. D2 is needed for assembly of a stable PSII complex. This chain is Photosystem II D2 protein, found in Barbarea verna (Land cress).